The following is a 98-amino-acid chain: NADH-ubiquinone oxidoreductase chain 4L (98 aa).

The next 3 helical transmembrane spans lie at Met-1 to Ile-21, Leu-26 to Leu-46, and Ala-59 to Val-79.

It belongs to the complex I subunit 4L family. In terms of assembly, core subunit of respiratory chain NADH dehydrogenase (Complex I) which is composed of 45 different subunits.

It localises to the mitochondrion inner membrane. It catalyses the reaction a ubiquinone + NADH + 5 H(+)(in) = a ubiquinol + NAD(+) + 4 H(+)(out). Functionally, core subunit of the mitochondrial membrane respiratory chain NADH dehydrogenase (Complex I) which catalyzes electron transfer from NADH through the respiratory chain, using ubiquinone as an electron acceptor. Part of the enzyme membrane arm which is embedded in the lipid bilayer and involved in proton translocation. This is NADH-ubiquinone oxidoreductase chain 4L (MT-ND4L) from Caenolestes fuliginosus (Shrew opossum).